We begin with the raw amino-acid sequence, 902 residues long: Androgen receptor (902 aa).

Positions 1–540 (MEVQLGLGRV…PIDYYFPPQK (540 aa)) are modulating. The segment at 1 to 569 (MEVQLGLGRV…GSCKVFFKRA (569 aa)) is interaction with ZNF318. Disordered regions lie at residues 35–146 (QNPG…LSLL) and 194–224 (QQEVISEGSSSVRAREATGAPSSSKDSYLGG). Ser-61 is modified (phosphoserine; by CDK9). Ser-75 is modified (phosphoserine). Residues 94 to 103 (QPSQQQSASE) are compositionally biased toward low complexity. Composition is skewed to polar residues over residues 196–205 (EVISEGSSSV) and 213–224 (APSSSKDSYLGG). Tyr-221 bears the Phosphotyrosine; by CSK mark. Residue Ser-254 is modified to Phosphoserine. Tyr-265 carries the phosphotyrosine; by CSK and TNK2 modification. The residue at position 290 (Ser-290) is a Phosphoserine. Phosphotyrosine; by CSK occurs at positions 305, 344, 355, and 360. Tyr-361 is modified (phosphotyrosine; by CSK and TNK2). Residue Lys-384 forms a Glycyl lysine isopeptide (Lys-Gly) (interchain with G-Cter in SUMO) linkage. Tyr-391 carries the post-translational modification Phosphotyrosine; by CSK. The tract at residues 439 to 465 (EGQLYGPGGGGGSSSPSDAGPVAPYGY) is disordered. Lys-503 is covalently cross-linked (Glycyl lysine isopeptide (Lys-Gly) (interchain with G-Cter in SUMO)). Tyr-517 and Tyr-534 each carry phosphotyrosine; by CSK. The interval 534–901 (YYFPPQKTCL…GKVKPIYFHT (368 aa)) is interaction with LPXN. Positions 541–614 (TCLICGDEAS…AGMTLGARKL (74 aa)) form a DNA-binding region, nuclear receptor. 2 NR C4-type zinc fingers span residues 542–562 (CLICGDEASGCHYGALTCGSC) and 578–602 (CASRNDCTIDKFRRKNCPSCRLRKC). The segment at 554 to 644 (YGALTCGSCK…TEDPSQKMTV (91 aa)) is interaction with HIPK3. Residues 574-901 (QKYLCASRND…GKVKPIYFHT (328 aa)) are interaction with CCAR1. The tract at residues 607–901 (MTLGARKLKK…GKVKPIYFHT (295 aa)) is interaction with KAT7. Ser-633 is modified (phosphoserine). Positions 651 to 882 (ECQPIFLNVL…DFPEMMAEII (232 aa)) constitute an NR LBD domain. 17beta-hydroxy-5alpha-androstan-3-one-binding residues include Asn-688 and Arg-735. Residues Lys-828 and Lys-830 each participate in a glycyl lysine isopeptide (Lys-Gly) (interchain with G-Cter in ubiquitin) cross-link. A 17beta-hydroxy-5alpha-androstan-3-one-binding site is contributed by Thr-860. A Phosphotyrosine; by CSK modification is found at Tyr-898.

It belongs to the nuclear hormone receptor family. NR3 subfamily. As to quaternary structure, binds DNA as a homodimer. Part of a ternary complex containing AR, EFCAB6/DJBP and PARK7. Interacts with HIPK3 and NR0B2 in the presence of androgen. The ligand binding domain interacts with KAT7/HBO1 in the presence of dihydrotestosterone. Interacts with EFCAB6/DJBP, PQBP1, RANBP9, RBAK, SPDEF, SRA1, TGFB1I1, ZNF318 and RREB1. Interacts with ZMIZ1/ZIMP10 and ZMIZ2/ZMIP7 which both enhance its transactivation activity. Interacts with SLC30A9 and RAD54L2/ARIP4. Interacts with MACROD1 (via macro domain). Interacts via the ligand-binding domain with LXXLL and FXXLF motifs from NCOA1, NCOA2, NCOA3 and MAGEA11. Interacts (via nuclear receptor DNA binding domain and nuclear receptor ligand binding domain) with NCOA4. The AR N-terminal poly-Gln region binds Ran resulting in enhancement of AR-mediated transactivation. Ran-binding decreases as the poly-Gln length increases. Interacts with HIP1 (via coiled coil domain). Interacts (via ligand-binding domain) with TRIM68. Interacts with TNK2. Interacts with USP26. Interacts with RNF6. Interacts (regulated by RNF6 probably through polyubiquitination) with RNF14; regulates AR transcriptional activity. Interacts with PRMT2 and TRIM24. Interacts with RACK1. Interacts with RANBP10; this interaction enhances dihydrotestosterone-induced AR transcriptional activity. Interacts with PRPF6 in a hormone-independent way; this interaction enhances dihydrotestosterone-induced AR transcriptional activity. Interacts with STK4/MST1. Interacts with ZIPK/DAPK3. Interacts with LPXN. Interacts with MAK. Part of a complex containing AR, MAK and NCOA3. Interacts with CRY1. Interacts with CCAR1 and GATA2. Interacts with BUD31. Interacts with ARID4A. Interacts with ARID4B. Interacts (via NR LBD domain) with ZBTB7A; the interaction is direct and androgen-dependent. Interacts with NCOR1. Interacts with NCOR2. Interacts with CRY2 in a ligand-dependent manner. Phosphorylated in prostate cancer cells in response to several growth factors including EGF. Phosphorylation is induced by c-Src kinase (CSK). Tyr-517 is one of the major phosphorylation sites and an increase in phosphorylation and Src kinase activity is associated with prostate cancer progression. Phosphorylation by TNK2 enhances the DNA-binding and transcriptional activity. Phosphorylation at Ser-61 by CDK9 regulates AR promoter selectivity and cell growth. Phosphorylation by PAK6 leads to AR-mediated transcription inhibition. Post-translationally, sumoylated on Lys-384 (major) and Lys-503. Ubiquitinated. Deubiquitinated by USP26. 'Lys-6' and 'Lys-27'-linked polyubiquitination by RNF6 modulates AR transcriptional activity and specificity. In terms of processing, palmitoylated by ZDHHC7 and ZDHHC21. Palmitoylation is required for plasma membrane targeting and for rapid intracellular signaling via ERK and AKT kinases and cAMP generation. In terms of tissue distribution, highest levels in the seminal vesicle, ventral prostate and coagulating gland with lower levels in the kidney and levator ani muscle.

It is found in the nucleus. The protein localises to the cytoplasm. In terms of biological role, steroid hormone receptors are ligand-activated transcription factors that regulate eukaryotic gene expression and affect cellular proliferation and differentiation in target tissues. Transcription factor activity is modulated by bound coactivator and corepressor proteins like ZBTB7A that recruits NCOR1 and NCOR2 to the androgen response elements/ARE on target genes, negatively regulating androgen receptor signaling and androgen-induced cell proliferation. Transcription activation is also down-regulated by NR0B2. Activated, but not phosphorylated, by HIPK3 and ZIPK/DAPK3. This chain is Androgen receptor (Ar), found in Rattus norvegicus (Rat).